The following is a 168-amino-acid chain: Photosystem I assembly protein Ycf3 (168 aa).

TPR repeat units lie at residues 35-68, 72-105, and 120-153; these read AFAYYINGMSAQSEGNYAEALQNYYQAMHLEMDP, SYILYNIGIIHTSNGEHSKALEYYCRAIERNPFL, and GEQAIQQGDSEIAEAWFDQAAEYWKQARTLTPDN.

It belongs to the Ycf3 family.

It is found in the plastid membrane. In terms of biological role, essential for the assembly of the photosystem I (PSI) complex. May act as a chaperone-like factor to guide the assembly of the PSI subunits. The chain is Photosystem I assembly protein Ycf3 from Cuscuta obtusiflora (Peruvian dodder).